Here is a 492-residue protein sequence, read N- to C-terminus: Citrate synthase, peroxisomal (492 aa).

Active-site residues include H307, H346, and D402. The tract at residues 469–492 is disordered; that stretch reads PAKVRSQDSYSSATTKRYSKVTSH. Residues 475 to 484 show a composition bias toward polar residues; the sequence is QDSYSSATTK.

The protein belongs to the citrate synthase family.

It localises to the peroxisome. The enzyme catalyses oxaloacetate + acetyl-CoA + H2O = citrate + CoA + H(+). It participates in carbohydrate metabolism; tricarboxylic acid cycle; isocitrate from oxaloacetate: step 1/2. In terms of biological role, peroxisomal protein involved in the cellular biosynthesis of citrate, and required primarily for cell growth and modulation of multicellular development. This is Citrate synthase, peroxisomal (cshA) from Dictyostelium discoideum (Social amoeba).